We begin with the raw amino-acid sequence, 192 residues long: Pyridoxal 5'-phosphate synthase subunit PdxT (192 aa).

L-glutamine is bound at residue 53 to 55 (GES). Cys-82 functions as the Nucleophile in the catalytic mechanism. L-glutamine contacts are provided by residues Arg-108 and 134–135 (IR). Active-site charge relay system residues include His-170 and Glu-172.

It belongs to the glutaminase PdxT/SNO family. As to quaternary structure, in the presence of PdxS, forms a dodecamer of heterodimers. Only shows activity in the heterodimer.

It carries out the reaction aldehydo-D-ribose 5-phosphate + D-glyceraldehyde 3-phosphate + L-glutamine = pyridoxal 5'-phosphate + L-glutamate + phosphate + 3 H2O + H(+). The enzyme catalyses L-glutamine + H2O = L-glutamate + NH4(+). Its pathway is cofactor biosynthesis; pyridoxal 5'-phosphate biosynthesis. In terms of biological role, catalyzes the hydrolysis of glutamine to glutamate and ammonia as part of the biosynthesis of pyridoxal 5'-phosphate. The resulting ammonia molecule is channeled to the active site of PdxS. In Methanothermobacter thermautotrophicus (strain ATCC 29096 / DSM 1053 / JCM 10044 / NBRC 100330 / Delta H) (Methanobacterium thermoautotrophicum), this protein is Pyridoxal 5'-phosphate synthase subunit PdxT.